We begin with the raw amino-acid sequence, 260 residues long: Ubiquinone/menaquinone biosynthesis C-methyltransferase UbiE (260 aa).

S-adenosyl-L-methionine-binding positions include Thr83, Asp104, 132–133 (NA), and Ser149.

The protein belongs to the class I-like SAM-binding methyltransferase superfamily. MenG/UbiE family.

The catalysed reaction is a 2-demethylmenaquinol + S-adenosyl-L-methionine = a menaquinol + S-adenosyl-L-homocysteine + H(+). The enzyme catalyses a 2-methoxy-6-(all-trans-polyprenyl)benzene-1,4-diol + S-adenosyl-L-methionine = a 5-methoxy-2-methyl-3-(all-trans-polyprenyl)benzene-1,4-diol + S-adenosyl-L-homocysteine + H(+). Its pathway is quinol/quinone metabolism; menaquinone biosynthesis; menaquinol from 1,4-dihydroxy-2-naphthoate: step 2/2. It participates in cofactor biosynthesis; ubiquinone biosynthesis. Functionally, methyltransferase required for the conversion of demethylmenaquinol (DMKH2) to menaquinol (MKH2) and the conversion of 2-polyprenyl-6-methoxy-1,4-benzoquinol (DDMQH2) to 2-polyprenyl-3-methyl-6-methoxy-1,4-benzoquinol (DMQH2). The polypeptide is Ubiquinone/menaquinone biosynthesis C-methyltransferase UbiE (Vibrio vulnificus (strain CMCP6)).